The chain runs to 246 residues: DNA polymerase sliding clamp (246 aa).

It belongs to the PCNA family. In terms of assembly, homotrimer. The subunits circularize to form a toroid; DNA passes through its center. Replication factor C (RFC) is required to load the toroid on the DNA.

Functionally, sliding clamp subunit that acts as a moving platform for DNA processing. Responsible for tethering the catalytic subunit of DNA polymerase and other proteins to DNA during high-speed replication. This Thermoplasma acidophilum (strain ATCC 25905 / DSM 1728 / JCM 9062 / NBRC 15155 / AMRC-C165) protein is DNA polymerase sliding clamp.